A 1377-amino-acid polypeptide reads, in one-letter code: DNA-directed RNA polymerase subunit beta' (1377 aa).

4 residues coordinate Zn(2+): cysteine 70, cysteine 72, cysteine 85, and cysteine 88. Residues aspartate 460, aspartate 462, and aspartate 464 each coordinate Mg(2+). Zn(2+) is bound by residues cysteine 808, cysteine 882, cysteine 889, and cysteine 892.

It belongs to the RNA polymerase beta' chain family. The RNAP catalytic core consists of 2 alpha, 1 beta, 1 beta' and 1 omega subunit. When a sigma factor is associated with the core the holoenzyme is formed, which can initiate transcription. The cofactor is Mg(2+). It depends on Zn(2+) as a cofactor.

It carries out the reaction RNA(n) + a ribonucleoside 5'-triphosphate = RNA(n+1) + diphosphate. Functionally, DNA-dependent RNA polymerase catalyzes the transcription of DNA into RNA using the four ribonucleoside triphosphates as substrates. The chain is DNA-directed RNA polymerase subunit beta' from Geotalea uraniireducens (strain Rf4) (Geobacter uraniireducens).